The chain runs to 508 residues: Lysine--tRNA ligase (508 aa).

Mg(2+) is bound by residues Glu403 and Glu410.

It belongs to the class-II aminoacyl-tRNA synthetase family. Homodimer. Requires Mg(2+) as cofactor.

The protein resides in the cytoplasm. It catalyses the reaction tRNA(Lys) + L-lysine + ATP = L-lysyl-tRNA(Lys) + AMP + diphosphate. The polypeptide is Lysine--tRNA ligase (Methanoculleus marisnigri (strain ATCC 35101 / DSM 1498 / JR1)).